A 465-amino-acid chain; its full sequence is CCA-adding enzyme (465 aa).

The ATP site is built by serine 63 and lysine 66. CTP-binding residues include serine 63 and lysine 66. The Mg(2+) site is built by glutamate 75, aspartate 77, and aspartate 127. ATP-binding residues include histidine 149, lysine 171, and tyrosine 180. The CTP site is built by histidine 149, lysine 171, and tyrosine 180.

It belongs to the tRNA nucleotidyltransferase/poly(A) polymerase family. Archaeal CCA-adding enzyme subfamily. In terms of assembly, homodimer. Mg(2+) is required as a cofactor.

The enzyme catalyses a tRNA precursor + 2 CTP + ATP = a tRNA with a 3' CCA end + 3 diphosphate. It carries out the reaction a tRNA with a 3' CCA end + 2 CTP + ATP = a tRNA with a 3' CCACCA end + 3 diphosphate. In terms of biological role, catalyzes the addition and repair of the essential 3'-terminal CCA sequence in tRNAs without using a nucleic acid template. Adds these three nucleotides in the order of C, C, and A to the tRNA nucleotide-73, using CTP and ATP as substrates and producing inorganic pyrophosphate. tRNA 3'-terminal CCA addition is required both for tRNA processing and repair. Also involved in tRNA surveillance by mediating tandem CCA addition to generate a CCACCA at the 3' terminus of unstable tRNAs. While stable tRNAs receive only 3'-terminal CCA, unstable tRNAs are marked with CCACCA and rapidly degraded. The sequence is that of CCA-adding enzyme from Aeropyrum pernix (strain ATCC 700893 / DSM 11879 / JCM 9820 / NBRC 100138 / K1).